The primary structure comprises 292 residues: MAISAKLVKELREKTGAGMMDCKKALTETDGDIDKAIDYLREKGIAKAAKKADRIAAEGLVHVEVKDNEAAIVEINSETDFVARNEGFQELVKEIANHILDSKVETVDALMESKLSSGKTVDERMKEAISTIGEKLSIRRFSIRTKTDNDAFGAYLHMGGRIGVLTVVEGTTDEEAAKDVAMHIAAINPKYVSSEQVSEEEINHEREVLKQQALNEGKPEKIVEKMVEGRLRKYLQEICAVDQNFVKNPDETVEAFLKAKGGKLTDFVRYEVGEGMEKREENFAEEVKGQMK.

An involved in Mg(2+) ion dislocation from EF-Tu region spans residues 79 to 82; that stretch reads TDFV.

This sequence belongs to the EF-Ts family.

The protein resides in the cytoplasm. Its function is as follows. Associates with the EF-Tu.GDP complex and induces the exchange of GDP to GTP. It remains bound to the aminoacyl-tRNA.EF-Tu.GTP complex up to the GTP hydrolysis stage on the ribosome. The sequence is that of Elongation factor Ts from Staphylococcus epidermidis (strain ATCC 12228 / FDA PCI 1200).